The sequence spans 1356 residues: Vascular endothelial growth factor receptor 2 (1356 aa).

The N-terminal stretch at 1–19 (MQSKVLLAVALWLCVETRA) is a signal peptide. At 20 to 764 (ASVGLPSVSL…EGAQEKTNLE (745 aa)) the chain is on the extracellular side. N-linked (GlcNAc...) asparagine glycosylation is found at N46, N66, N96, N143, N158, and N245. 7 consecutive Ig-like C2-type domains span residues 46 to 110 (NTTL…ETDL), 141 to 207 (NKNK…INDE), 224 to 320 (YDVV…KNST), 328 to 414 (PFVA…HVVS), 421 to 548 (PQIG…FHVT), 551 to 660 (PEIT…RQLT), and 667 to 753 (PTIT…AFFI). C53 and C103 are joined by a disulfide. An intrachain disulfide couples C150 to C200. An intrachain disulfide couples C246 to C307. Residues N318, N374, N395, N511, N523, N580, N613, N619, N631, N675, N704, and N721 are each glycosylated (N-linked (GlcNAc...) asparagine). 2 cysteine pairs are disulfide-bonded: C445/C530 and C571/C642. The cysteines at positions 688 and 737 are disulfide-linked. A helical transmembrane segment spans residues 765-785 (IIILVGTAVIAMFFWLLLVII). Topologically, residues 786–1356 (LRTVKRANGG…SGTTLSSPPV (571 aa)) are cytoplasmic. Y801 bears the Phosphotyrosine mark. The Protein kinase domain occupies 834–1162 (LKLGKPLGRG…FSELVEHLGN (329 aa)). ATP contacts are provided by residues 840 to 848 (LGRGAFGQV) and K868. Position 951 is a phosphotyrosine; by autocatalysis (Y951). Phosphoserine is present on residues S982 and S984. Y996 carries the post-translational modification Phosphotyrosine; by autocatalysis. An intrachain disulfide couples C1024 to C1045. Catalysis depends on D1028, which acts as the Proton acceptor. Residues Y1054, Y1059, Y1175, and Y1214 each carry the phosphotyrosine; by autocatalysis modification. Phosphoserine occurs at positions 1231 and 1235. Residue T1238 is modified to Phosphothreonine. Residues 1274–1318 (DRTKLSPSFGGMVPSKSRESVASEGSNQTSGYQSGYHSDDTDTTV) are disordered. Polar residues predominate over residues 1296–1309 (SEGSNQTSGYQSGY). 3 positions are modified to phosphotyrosine; by autocatalysis: Y1305, Y1309, and Y1319.

It belongs to the protein kinase superfamily. Tyr protein kinase family. CSF-1/PDGF receptor subfamily. Homodimer in the presence of bound dimeric VEGFA, VEGFC or VEGFD ligands; monomeric in the absence of bound ligands. Can also form heterodimers with FLT1/VEGFR1 and KDR/VEGFR2. Interacts (tyrosine phosphorylated) with LFYN, NCK1, PLCG1. Interacts (tyrosine-phosphorylated active form preferentially) with DAB2IP (via C2 domain and active form preferentially); the interaction occurs at the late phase of VEGFA response and inhibits KDR/VEGFR2 activity. Interacts with SHBSH2D2A/TSAD, GRB2, MYOF, CBL and PDCD6. Interacts (via C-terminus domain) with ERN1 (via kinase domain); the interaction is facilitated in a XBP1 isoform 1- and vascular endothelial growth factor (VEGF)-dependent manner in endothelial cells. Interacts (via juxtamembrane region) with chaperone PDCL3 (via thioredoxin fold region); the interaction leads to increased KDR/VEGFR2 abundance through inhibition of its ubiquitination and degradation. Interacts (tyrosine phosphorylated) with CCDC88A/GIV (via SH2-like region); binding requires autophosphorylation of the KDR/VEGFR2 C-terminal region. Interacts with isoform 2 of BSG. Interacts with SLC31A1; this interaction is induced upon VEGFA stimulation leading to SLC31A1 and KDR subsequent co-internalization to early endosomes, thereby activating KDR downstream signaling in endothelial cells. As to quaternary structure, (Microbial infection) Interacts with HIV-1 Tat. In terms of processing, N-glycosylated. Ubiquitinated. Tyrosine phosphorylation of the receptor promotes its poly-ubiquitination, leading to its degradation via the proteasome or lysosomal proteases. Post-translationally, autophosphorylated on tyrosine residues upon ligand binding. Autophosphorylation occurs in trans, i.e. one subunit of the dimeric receptor phosphorylates tyrosine residues on the other subunit. Phosphorylation at Tyr-951 is important for interaction with SH2D2A/TSAD and VEGFA-mediated reorganization of the actin cytoskeleton. Phosphorylation at Tyr-1175 is important for interaction with PLCG1 and SHB. Phosphorylation at Tyr-1214 is important for interaction with NCK1 and FYN. Dephosphorylated by PTPRB. Dephosphorylated by PTPRJ at Tyr-951, Tyr-996, Tyr-1054, Tyr-1059, Tyr-1175 and Tyr-1214. In terms of processing, the inhibitory disulfide bond between Cys-1024 and Cys-1045 may serve as a specific molecular switch for H(2)S-induced modification that regulates KDR/VEGFR2 function. Detected in cornea (at protein level). Widely expressed.

It localises to the cell junction. The protein localises to the endoplasmic reticulum. The protein resides in the cell membrane. Its subcellular location is the cytoplasm. It is found in the nucleus. It localises to the cytoplasmic vesicle. The protein localises to the early endosome. The protein resides in the secreted. The catalysed reaction is L-tyrosyl-[protein] + ATP = O-phospho-L-tyrosyl-[protein] + ADP + H(+). Present in an inactive conformation in the absence of bound ligand. Binding of VEGFA, VEGFC or VEGFD leads to dimerization and activation by autophosphorylation on tyrosine residues. Inhibited by the small molecule PTK inhibitor SU5614 ((3Z)-5-Chloro-3-[(3,5-dimethyl-1H-pyrrol-2-yl)methylene]-1,3-dihydro-2H-indol-2-one). May be regulated by hydrogen sulfide (H(2)S) levels via a H(2)S-sensitive intracellular disulfide bond. Tyrosine-protein kinase that acts as a cell-surface receptor for VEGFA, VEGFC and VEGFD. Plays an essential role in the regulation of angiogenesis, vascular development, vascular permeability, and embryonic hematopoiesis. Promotes proliferation, survival, migration and differentiation of endothelial cells. Promotes reorganization of the actin cytoskeleton. Isoforms lacking a transmembrane domain, such as isoform 2 and isoform 3, may function as decoy receptors for VEGFA, VEGFC and/or VEGFD. Isoform 2 plays an important role as negative regulator of VEGFA- and VEGFC-mediated lymphangiogenesis by limiting the amount of free VEGFA and/or VEGFC and preventing their binding to FLT4. Modulates FLT1 and FLT4 signaling by forming heterodimers. Binding of vascular growth factors to isoform 1 leads to the activation of several signaling cascades. Activation of PLCG1 leads to the production of the cellular signaling molecules diacylglycerol and inositol 1,4,5-trisphosphate and the activation of protein kinase C. Mediates activation of MAPK1/ERK2, MAPK3/ERK1 and the MAP kinase signaling pathway, as well as of the AKT1 signaling pathway. Mediates phosphorylation of PIK3R1, the regulatory subunit of phosphatidylinositol 3-kinase, reorganization of the actin cytoskeleton and activation of PTK2/FAK1. Required for VEGFA-mediated induction of NOS2 and NOS3, leading to the production of the signaling molecule nitric oxide (NO) by endothelial cells. Phosphorylates PLCG1. Promotes phosphorylation of FYN, NCK1, NOS3, PIK3R1, PTK2/FAK1 and SRC. This is Vascular endothelial growth factor receptor 2 from Homo sapiens (Human).